We begin with the raw amino-acid sequence, 474 residues long: PTS system N-acetylmuramic acid-specific EIIBC component (474 aa).

Residues 1-89 (MAKEISSELL…SELLGEAPVQ (89 aa)) enclose the PTS EIIB type-1 domain. At 1-123 (MAKEISSELL…LAKFATIFTP (123 aa)) the chain is on the cytoplasmic side. Cys29 acts as the Phosphocysteine intermediate; for EIIB activity in catalysis. Residues 115-474 (AKFATIFTPL…LFGCRNVNLD (360 aa)) enclose the PTS EIIC type-1 domain. A helical transmembrane segment spans residues 124-144 (LIPGFIAAGLLLGIATLIATV). At 145-157 (MHVPADAQGTLPD) the chain is on the periplasmic side. Residues 158-178 (ALNFMKVFSKGLFTFLVILVG) traverse the membrane as a helical segment. The Cytoplasmic segment spans residues 179–180 (YN). A helical membrane pass occupies residues 181–201 (AAQAFGGTGVNGAIIAALFLL). At 202–217 (GYNPAATTGYYAGFHD) the chain is on the periplasmic side. The helical transmembrane segment at 218–238 (FFGLPIDPRGNIIGVLIAAWA) threads the bilayer. Residues 239–260 (CARIEGMVRRFMPDDLDMLLTS) lie on the Cytoplasmic side of the membrane. Residues 261–281 (LITLLITATLAYLIIMPLGGW) traverse the membrane as a helical segment. Residues 282–301 (LFEGMSWLFMHLNSNPLGCA) are Periplasmic-facing. The helical transmembrane segment at 302 to 322 (VLAGLFLIAVVFGVHQGFIPV) threads the bilayer. The Cytoplasmic portion of the chain corresponds to 323–334 (YLALMDSQGFNS). Residues 335–355 (LFPILSMAGAGQVGAALALYW) form a helical membrane-spanning segment. Residues 356–368 (RAQPHSGLRSQVR) lie on the Periplasmic side of the membrane. A helical membrane pass occupies residues 369-389 (GAIIPGLLGVGEPLIYGVTLP). Residues 390 to 393 (RMKP) lie on the Cytoplasmic side of the membrane. A helical transmembrane segment spans residues 394-414 (FITACLGGAAGGLFIGLIAWW). Over 415 to 440 (GLPMGLNSAFGPSGLVALPLMTSAQG) the chain is Periplasmic. A helical membrane pass occupies residues 441 to 461 (ILPAMAIYAGGILVAWVCGFI). Topologically, residues 462–474 (FTTLFGCRNVNLD) are cytoplasmic.

It localises to the cell inner membrane. It catalyses the reaction N-acetyl-beta-D-muramate(out) + N(pros)-phospho-L-histidyl-[protein] = N-acetyl-beta-D-muramate 6-phosphate(in) + L-histidyl-[protein]. In terms of biological role, the phosphoenolpyruvate-dependent sugar phosphotransferase system (sugar PTS), a major carbohydrate active transport system, catalyzes the phosphorylation of incoming sugar substrates concomitantly with their translocation across the cell membrane. This system is involved in N-acetylmuramic acid (MurNAc) transport, yielding cytoplasmic MurNAc-6-P. Is also able to take up anhydro-N-acetylmuramic acid (anhMurNAc), but cannot phosphorylate the carbon 6, probably because of the 1,6-anhydro ring. The sequence is that of PTS system N-acetylmuramic acid-specific EIIBC component (murP) from Shigella dysenteriae serotype 1 (strain Sd197).